The sequence spans 119 residues: MSSHNDLGRASELAARQHLERNGLRLIQQNWSCRRGELDLVMLDGDTVVFVEVRARRHSAWGGALESVDARKRGKLVMAAELFLQQNSRWARHPCRFDVVAISTEGATRLDWIKNAFDA.

This sequence belongs to the UPF0102 family.

In Ectopseudomonas mendocina (strain ymp) (Pseudomonas mendocina), this protein is UPF0102 protein Pmen_0910.